The sequence spans 407 residues: Na(+)-translocating NADH-quinone reductase subunit F (407 aa).

The helical transmembrane segment at 3–23 (ITLGIAMFTVIVLALAVIILF) threads the bilayer. Residues 32–126 (GDITIEINDD…SMKVELPEEV (95 aa)) enclose the 2Fe-2S ferredoxin-type domain. [2Fe-2S] cluster-binding residues include C69, C75, C78, and C110. The FAD-binding FR-type domain maps to 129 to 269 (VKKWECTVIS…SGPFGEFFAK (141 aa)). The tract at residues 272-389 (DAEMVFVGGG…PIMNASVIKM (118 aa)) is catalytic.

This sequence belongs to the NqrF family. Composed of six subunits; NqrA, NqrB, NqrC, NqrD, NqrE and NqrF. The cofactor is [2Fe-2S] cluster. Requires FAD as cofactor.

The protein localises to the cell inner membrane. It catalyses the reaction a ubiquinone + n Na(+)(in) + NADH + H(+) = a ubiquinol + n Na(+)(out) + NAD(+). Functionally, NQR complex catalyzes the reduction of ubiquinone-1 to ubiquinol by two successive reactions, coupled with the transport of Na(+) ions from the cytoplasm to the periplasm. The first step is catalyzed by NqrF, which accepts electrons from NADH and reduces ubiquinone-1 to ubisemiquinone by a one-electron transfer pathway. This chain is Na(+)-translocating NADH-quinone reductase subunit F, found in Pasteurella multocida (strain Pm70).